The following is a 946-amino-acid chain: Structure-specific endonuclease subunit SLX4 (946 aa).

The segment covering 1-14 (MPASPLPALSPPAS) has biased composition (pro residues). 7 disordered regions span residues 1–35 (MPAS…IPPD), 54–119 (QHFD…EEAV), 147–318 (PSDE…GGFT), 339–399 (ADSA…AAQL), 416–471 (TKVP…PKHI), 577–748 (FPLL…GSGR), and 765–799 (ALSP…KADS). Basic and acidic residues predominate over residues 54 to 74 (QHFDDDIAGKDQEQSRKKSPE). 2 stretches are compositionally biased toward basic residues: residues 160 to 169 (KAGKPRKPRA) and 182 to 195 (KPKR…KAAK). A compositionally biased stretch (basic and acidic residues) spans 278–287 (AVSRRRDWTP). A compositionally biased stretch (basic residues) spans 453-469 (SKARSKKASTKAAAKPK). The span at 627 to 636 (KANDEPDHVM) shows a compositional bias: basic and acidic residues. Residues 707–717 (KSQSAIATSGS) are compositionally biased toward polar residues. A compositionally biased stretch (basic and acidic residues) spans 722–733 (KEPKRTKGKEVK).

This sequence belongs to the SLX4 family. In terms of assembly, forms a heterodimer with SLX1. Post-translationally, phosphorylated in response to DNA damage.

Its subcellular location is the nucleus. Its function is as follows. Regulatory subunit of the SLX1-SLX4 structure-specific endonuclease that resolves DNA secondary structures generated during DNA repair and recombination. Has endonuclease activity towards branched DNA substrates, introducing single-strand cuts in duplex DNA close to junctions with ss-DNA. The chain is Structure-specific endonuclease subunit SLX4 from Phaeosphaeria nodorum (strain SN15 / ATCC MYA-4574 / FGSC 10173) (Glume blotch fungus).